A 133-amino-acid chain; its full sequence is MHFMKRKHPCRIRKRADFLAVRTGEKRRGPLFLLEVKSREQTAGIKSPLVARVGFTVTRKNGNAVKRNRIKRRLREAVRVGLTDDIEAGTDYVIVAHSDALHAPFTFLISELSRRIKPKTKHQKRQQGNMNGI.

This sequence belongs to the RnpA family. Consists of a catalytic RNA component (M1 or rnpB) and a protein subunit.

The enzyme catalyses Endonucleolytic cleavage of RNA, removing 5'-extranucleotides from tRNA precursor.. RNaseP catalyzes the removal of the 5'-leader sequence from pre-tRNA to produce the mature 5'-terminus. It can also cleave other RNA substrates such as 4.5S RNA. The protein component plays an auxiliary but essential role in vivo by binding to the 5'-leader sequence and broadening the substrate specificity of the ribozyme. This is Ribonuclease P protein component from Bartonella quintana (strain Toulouse) (Rochalimaea quintana).